A 505-amino-acid polypeptide reads, in one-letter code: Phosphoglycerate kinase A (505 aa).

Val-32, Asp-33, Phe-34, Asn-35, Arg-48, Ser-70, His-71, Gly-73, Arg-74, Arg-224, His-260, and Arg-261 together coordinate (2R)-3-phosphoglycerate. Gly-306 and Ala-307 together coordinate ADP. Gly-306 provides a ligand contact to CDP. Residues Ala-307 and Lys-308 each coordinate AMP. Residue Ala-307 coordinates ATP. Ala-307 provides a ligand contact to Mg(2+). Lys-308 is a (2R)-3-phosphoglycerate binding site. Glu-311 serves as a coordination point for CDP. Residue Glu-311 coordinates Mg(2+). Positions 312 and 330 each coordinate ADP. AMP is bound at residue Lys-312. Lys-312 is a binding site for ATP. Gly-330 serves as a coordination point for CDP. Positions 331 and 403 each coordinate AMP. The ATP site is built by Ala-331 and Ala-403. ADP contacts are provided by Ala-403 and Asn-427. Positions 428 and 433 each coordinate CDP. 4 residues coordinate ADP: Phe-433, Glu-434, Glu-466, and Ser-467. Position 434 (Glu-434) interacts with AMP. ATP-binding residues include Glu-434, Glu-466, and Ser-467. Glu-466 provides a ligand contact to Mg(2+).

Belongs to the phosphoglycerate kinase family. As to quaternary structure, monomer. Requires Mg(2+) as cofactor.

The enzyme catalyses (2R)-3-phosphoglycerate + ATP = (2R)-3-phospho-glyceroyl phosphate + ADP. It functions in the pathway carbohydrate degradation; glycolysis; pyruvate from D-glyceraldehyde 3-phosphate: step 2/5. This chain is Phosphoglycerate kinase A, found in Trypanosoma brucei brucei.